A 397-amino-acid polypeptide reads, in one-letter code: Cell division protein DivIB (397 aa).

Residues 1-138 (MTTKDKGDQK…RIERIHLYRA (138 aa)) lie on the Cytoplasmic side of the membrane. Residues 24–37 (QEYLEKKSQEKASE) are compositionally biased toward basic and acidic residues. The segment at 24-115 (QEYLEKKSQE…DRTEKFIGQA (92 aa)) is disordered. Acidic residues predominate over residues 74 to 103 (ASDDDETNESEESEDVEEPEEENIEESSDV). A helical membrane pass occupies residues 139 to 159 (LPVLVISSLLILLSLYFITPL). The region spanning 160 to 231 (GSLKNLVVTG…ITFKIQVTEY (72 aa)) is the POTRA domain. Residues 160–397 (GSLKNLVVTG…PSDVTDETNN (238 aa)) lie on the Extracellular side of the membrane. Residues 360-397 (LVQKEEQDQEQEKEESSEETVPGETEAAPSDVTDETNN) are disordered. Positions 366–377 (QDQEQEKEESSE) are enriched in acidic residues.

The protein belongs to the FtsQ/DivIB family. DivIB subfamily.

Its subcellular location is the cell membrane. In terms of biological role, cell division protein that may be involved in stabilizing or promoting the assembly of the division complex. The polypeptide is Cell division protein DivIB (Streptococcus gordonii (strain Challis / ATCC 35105 / BCRC 15272 / CH1 / DL1 / V288)).